Consider the following 122-residue polypeptide: MSRKKKPLMSARGKPIRYKVHVKKGDTVQIIAGKDKGKVGEVLKVLPKVSKVIVKDVNIITKHVKPQQEGESGKIVTTEAPIHSSNVMLYSTKQKVASRICYTFTDDGRKVRMLKKTGEVID.

The protein belongs to the universal ribosomal protein uL24 family. Part of the 50S ribosomal subunit.

Its function is as follows. One of two assembly initiator proteins, it binds directly to the 5'-end of the 23S rRNA, where it nucleates assembly of the 50S subunit. In terms of biological role, one of the proteins that surrounds the polypeptide exit tunnel on the outside of the subunit. This is Large ribosomal subunit protein uL24 from Trichodesmium erythraeum (strain IMS101).